We begin with the raw amino-acid sequence, 200 residues long: LHFPL tetraspan subfamily member 6 protein (200 aa).

Positions 1–21 are cleaved as a signal peptide; the sequence is MASSLTCTGVIWALLSFLCAA. A run of 3 helical transmembrane segments spans residues 84–104, 123–143, and 166–186; these read ICTI…LTAL, GIQF…PLGW, and IGWA…LCTW.

Belongs to the LHFP family. In terms of tissue distribution, pancreas, kidney, skeletal muscle, liver, lung brain, heart, colon, small intestine, uterus, testis, prostate, thymus, spleen and placenta.

The protein resides in the membrane. This Homo sapiens (Human) protein is LHFPL tetraspan subfamily member 6 protein.